A 508-amino-acid polypeptide reads, in one-letter code: Fasciclin-3 (508 aa).

An N-terminal signal peptide occupies residues 1–20; the sequence is MSRIVFICLAAILTDALTWA. At glutamine 21 the chain carries Pyrrolidone carboxylic acid. The Extracellular portion of the chain corresponds to 21–346; that stretch reads QVNVEPNTAL…SSKPPSSSLD (326 aa). Residues 44–106 form the Ig-like V-type domain; sequence GRSINYCRIE…NGQVKCSLGV (63 aa). 2 Ig-like C2-type domains span residues 126–223 and 236–310; these read PIIE…ESVP and APVH…GLTL. Cysteine 150 and cysteine 211 form a disulfide bridge. 3 N-linked (GlcNAc...) asparagine glycosylation sites follow: asparagine 160, asparagine 257, and asparagine 300. The helical transmembrane segment at 347–370 threads the bilayer; the sequence is VAAIVGIVVAVAVLVLVVLLIVFA. Residues 371-508 lie on the Cytoplasmic side of the membrane; the sequence is RATGRWCFGG…QSTSPVWTFK (138 aa). The tract at residues 381–439 is disordered; sequence KSIKTPTNETSDTESADIKATSTATATTTMGGVGVSAEEEETVNEQESPQEQQQQQQKK. The residue at position 382 (serine 382) is a Phosphoserine. Composition is skewed to low complexity over residues 400–409 and 425–437; these read ATSTATATTT and EQES…QQQQ. Serine 459 is modified (phosphoserine).

As to expression, expressed on different subsets of axon bundles (fascicles) in insect embryos.

The protein resides in the membrane. Functionally, mediates cell adhesion in a Ca(2+)-independent manner. It plays a role in axon outgrowth, guidance and fasciculation of the developing nervous system. Function in neurons is essential for adult survival, and is important for climbing behavior and activity. In Drosophila melanogaster (Fruit fly), this protein is Fasciclin-3 (Fas3).